A 212-amino-acid polypeptide reads, in one-letter code: Adenine phosphoribosyltransferase (212 aa).

It belongs to the purine/pyrimidine phosphoribosyltransferase family. In terms of assembly, homodimer.

It localises to the cytoplasm. The catalysed reaction is AMP + diphosphate = 5-phospho-alpha-D-ribose 1-diphosphate + adenine. It participates in purine metabolism; AMP biosynthesis via salvage pathway; AMP from adenine: step 1/1. Catalyzes a salvage reaction resulting in the formation of AMP, that is energically less costly than de novo synthesis. The polypeptide is Adenine phosphoribosyltransferase (Mycobacterium tuberculosis (strain CDC 1551 / Oshkosh)).